We begin with the raw amino-acid sequence, 70 residues long: Beta-defensin 107A (70 aa).

Residues 1–26 (MPGAMKIFFFIFAALILLAQIFQART) form the signal peptide. Cystine bridges form between C41/C55 and C45/C64.

Belongs to the beta-defensin family.

The protein resides in the secreted. Functionally, has antibacterial activity. This chain is Beta-defensin 107A (DEFB107A), found in Pan troglodytes (Chimpanzee).